A 174-amino-acid polypeptide reads, in one-letter code: 3-hydroxydecanoyl-[acyl-carrier-protein] dehydratase (174 aa).

Residue His71 is part of the active site.

The protein belongs to the thioester dehydratase family. FabA subfamily. As to quaternary structure, homodimer.

Its subcellular location is the cytoplasm. The enzyme catalyses a (3R)-hydroxyacyl-[ACP] = a (2E)-enoyl-[ACP] + H2O. It carries out the reaction (3R)-hydroxydecanoyl-[ACP] = (2E)-decenoyl-[ACP] + H2O. The catalysed reaction is (2E)-decenoyl-[ACP] = (3Z)-decenoyl-[ACP]. It functions in the pathway lipid metabolism; fatty acid biosynthesis. Necessary for the introduction of cis unsaturation into fatty acids. Catalyzes the dehydration of (3R)-3-hydroxydecanoyl-ACP to E-(2)-decenoyl-ACP and then its isomerization to Z-(3)-decenoyl-ACP. Can catalyze the dehydratase reaction for beta-hydroxyacyl-ACPs with saturated chain lengths up to 16:0, being most active on intermediate chain length. This is 3-hydroxydecanoyl-[acyl-carrier-protein] dehydratase from Nitrobacter hamburgensis (strain DSM 10229 / NCIMB 13809 / X14).